The chain runs to 445 residues: tRNA-2-methylthio-N(6)-dimethylallyladenosine synthase (445 aa).

The 118-residue stretch at 4–121 (NKIYIKTWGC…LPNMIQEVKK (118 aa)) folds into the MTTase N-terminal domain. [4Fe-4S] cluster-binding residues include Cys13, Cys50, Cys84, Cys158, Cys162, and Cys165. Residues 144–376 (RKPKVTAFVS…QTLIRNNTTM (233 aa)) form the Radical SAM core domain. A TRAM domain is found at 379-442 (QKMLGSIQSV…PNSLRGSYEK (64 aa)).

This sequence belongs to the methylthiotransferase family. MiaB subfamily. Monomer. It depends on [4Fe-4S] cluster as a cofactor.

It is found in the cytoplasm. The catalysed reaction is N(6)-dimethylallyladenosine(37) in tRNA + (sulfur carrier)-SH + AH2 + 2 S-adenosyl-L-methionine = 2-methylsulfanyl-N(6)-dimethylallyladenosine(37) in tRNA + (sulfur carrier)-H + 5'-deoxyadenosine + L-methionine + A + S-adenosyl-L-homocysteine + 2 H(+). In terms of biological role, catalyzes the methylthiolation of N6-(dimethylallyl)adenosine (i(6)A), leading to the formation of 2-methylthio-N6-(dimethylallyl)adenosine (ms(2)i(6)A) at position 37 in tRNAs that read codons beginning with uridine. This chain is tRNA-2-methylthio-N(6)-dimethylallyladenosine synthase, found in Buchnera aphidicola subsp. Baizongia pistaciae (strain Bp).